We begin with the raw amino-acid sequence, 445 residues long: Interferon-activable protein 202 (445 aa).

The span at 1 to 27 (MSNRNLRSSTNSEFSEGQHQTPSSDSS) shows a compositional bias: polar residues. Positions 1-57 (MSNRNLRSSTNSEFSEGQHQTPSSDSSGHGEDQPQASPGPNKKSHTPKKNISKGAVL) are disordered. The span at 42 to 51 (KKSHTPKKNI) shows a compositional bias: basic residues. 2 consecutive HIN-200 domains span residues 46-243 (TPKK…IKGE) and 244-441 (KLLK…MEVI). Required for homomultimerization regions lie at residues 82–89 (MFHATVAT) and 281–288 (MFHATVAT).

It belongs to the HIN-200 family. In terms of assembly, homomultimer; homotetramerizes (via HIN-200 domain 2), enhancing affinity for double-stranded DNA (dsDNA). Interacts (via HIN-200 domain 2) with AIM2 (via HIN-200 domain); preventing activation of the AIM2 inflammasome. Binds to several transcription factors, including NF-kappa-B p50 (NFKB1) and p65 (RELA), FOS, JUN, E2F1, E2F4, MYOD1 and myogenin. Also binds TP53/p53, the hypophosphorylated, growth-inhibitory form of the retinoblastoma protein and the p53-binding protein 1 (TP53BP1). In terms of processing, phosphorylated.

It is found in the cytoplasm. It localises to the nucleus. In terms of biological role, DNA-binding protein involved in innate immune response and has anti-inflammatory activity. Inhibits caspase activation in response to cytosolic DNA by preventing activation of the AIM2 inflammasome, probably by sequestering cytoplasmic DNA and preventing its being bound by AIM2. Also inhibits activation of the AIM2 inflammasome via a direct interaction with AIM2, which prevents the interaction between AIM2 and PYCARD and formation of the AIM2 inflammasome. Binds double-stranded DNA (dsDNA) in the cytosol. Has anti-apoptotic effects due to inhibition of the transcriptional activity of TP53/p53. Inhibits the transcriptional activity of several transcription factors, including NF-kappa-B p50 and p65, FOS, JUN, E2F1, E2F4, MYOD1 and myogenin. In Mus musculus (Mouse), this protein is Interferon-activable protein 202.